Consider the following 277-residue polypeptide: Lectin 1 (277 aa).

The first 30 residues, 1 to 30, serve as a signal peptide directing secretion; sequence MSFSSSNFYVILSISLTVFILLFNINKVNS. The N-linked (GlcNAc...) asparagine glycan is linked to Asn143. The Mn(2+) site is built by Glu152 and Asp154. Residues Asp154, Asn158, and Asp161 each coordinate Ca(2+). Mn(2+) is bound by residues Asp161 and His167. Asn269 carries an N-linked (GlcNAc...) asparagine glycan.

This sequence belongs to the leguminous lectin family.

Its function is as follows. Lectin that may be involved in a cell recognition process. The sequence is that of Lectin 1 (LEC1) from Medicago truncatula (Barrel medic).